A 558-amino-acid polypeptide reads, in one-letter code: MTTTTTKFRDVEIRAPRGTELMAKSWLTEAPLRMLMNNLDPDVAENPKELVVYGGIGRAARNWECFDKIVDTLKNLETDETLLVQSGKPVGVFKTHKDAPRVLIANSNLVPHWANWEHFNELDAKALAMYGQMTAGSWIYIGSQGIVQGTYETFVEAGRQHYNGDLKGRWVLTAGLGGMGGAQPLAATLAGACSLNIECQQASIDFRLRTRYVDEQATDLDDALARIDRYTKEGKAISIALHGNAAEILPELVRRGVRPDMVTDQTSAHDPLNGYLPVGWTWDEYRERAKKEPEAVVKAAKQSMAKHVQAMLDFQKMGVPTFDYGNNIRQMAKEEGVANAFDFPGFVPAYIRPLFCRGIGPFRWAALSGDPEDIYKTDAKVKELIPDDEHLHHWLDMARERISFQGLPARICWVGLGLRAKLGLAFNEMVRSGELSAPIVIGRDHLDSGSVASPNRETEAMQDGSDAVSDWPLLNALLNTAGGATWVSLHHGGGVGMGFSQHSGVVIVCDGTDEAAARIARVLTNDPATGVMRHADAGYEIAINCAKEQGLHLPMITQ.

Residues 54-55 (GG), Gln-132, 178-180 (GMG), Glu-198, 244-245 (NA), 265-269 (QTSAH), 275-276 (YL), and Tyr-324 contribute to the NAD(+) site. The active site involves Cys-412. Gly-494 contributes to the NAD(+) binding site.

This sequence belongs to the urocanase family. It depends on NAD(+) as a cofactor.

The protein localises to the cytoplasm. It catalyses the reaction 4-imidazolone-5-propanoate = trans-urocanate + H2O. The protein operates within amino-acid degradation; L-histidine degradation into L-glutamate; N-formimidoyl-L-glutamate from L-histidine: step 2/3. Catalyzes the conversion of urocanate to 4-imidazolone-5-propionate. This Acinetobacter baumannii (strain SDF) protein is Urocanate hydratase.